A 330-amino-acid polypeptide reads, in one-letter code: tRNA U34 carboxymethyltransferase (330 aa).

Carboxy-S-adenosyl-L-methionine contacts are provided by residues K98, W112, K117, G137, 187 to 188 (ME), M203, Y207, and R322. Residues 309–330 (NPSKTIEGYPGPKRATLIAEKP) form a disordered region.

It belongs to the class I-like SAM-binding methyltransferase superfamily. CmoB family. Homotetramer.

The enzyme catalyses carboxy-S-adenosyl-L-methionine + 5-hydroxyuridine(34) in tRNA = 5-carboxymethoxyuridine(34) in tRNA + S-adenosyl-L-homocysteine + H(+). Its function is as follows. Catalyzes carboxymethyl transfer from carboxy-S-adenosyl-L-methionine (Cx-SAM) to 5-hydroxyuridine (ho5U) to form 5-carboxymethoxyuridine (cmo5U) at position 34 in tRNAs. This Marinobacter nauticus (strain ATCC 700491 / DSM 11845 / VT8) (Marinobacter aquaeolei) protein is tRNA U34 carboxymethyltransferase.